The chain runs to 161 residues: DNA-directed RNA polymerase 18 kDa subunit (161 aa).

Belongs to the poxviridae DNA-directed RNA polymerase 18 kDa subunit family. As to quaternary structure, the DNA-dependent RNA polymerase used for intermediate and late genes expression consists of eight subunits Rpo30/OPG66, Rpo7/OPG90, Rpo22/OPG103, Rpo147/OPG105, Rpo18/OPG119, Rpo19/OPG131, Rpo132/OPG151 and Rpo35/OPG156. The same holoenzyme, with the addition of the transcription-specificity factor OPG109, is used for early gene expression.

The protein resides in the virion. The catalysed reaction is RNA(n) + a ribonucleoside 5'-triphosphate = RNA(n+1) + diphosphate. Its function is as follows. Part of the DNA-dependent RNA polymerase which catalyzes the transcription of viral DNA into RNA using the four ribonucleoside triphosphates as substrates. Responsible for the transcription of early, intermediate and late genes. DNA-dependent RNA polymerase associates with the early transcription factor (ETF), itself composed of OPG118 and OPG133, thereby allowing the early genes transcription. Late transcription, and probably also intermediate transcription, require newly synthesized RNA polymerase. The chain is DNA-directed RNA polymerase 18 kDa subunit (OPG119) from Vaccinia virus (strain Ankara) (VACV).